A 239-amino-acid chain; its full sequence is L-cystine transport system permease protein TcyL (239 aa).

Residues L21 to F216 form the ABC transmembrane type-1 domain. Transmembrane regions (helical) follow at residues L25 to P45, I69 to I89, P96 to I116, and E196 to F216.

It belongs to the binding-protein-dependent transport system permease family. The complex is composed of two ATP-binding proteins (TcyN), two transmembrane proteins (TcyL and TcyM) and two solute-binding proteins (TcyJ and TcyK).

It is found in the cell membrane. In terms of biological role, part of the ABC transporter complex TcyJKLMN involved in L-cystine import. Probably responsible for the translocation of the substrate across the membrane. Is also involved in cystathionine, djenkolate, and S-methylcysteine transport. In Bacillus subtilis (strain 168), this protein is L-cystine transport system permease protein TcyL (tcyL).